The primary structure comprises 312 residues: Thioredoxin reductase (312 aa).

33–43 (EGFFSGIAGGQ) serves as a coordination point for FAD. The cysteines at positions 138 and 141 are disulfide-linked. Residue 283–292 (DVQDKYYRQA) participates in FAD binding.

This sequence belongs to the class-II pyridine nucleotide-disulfide oxidoreductase family. As to quaternary structure, homodimer. It depends on FAD as a cofactor.

It is found in the cytoplasm. It catalyses the reaction [thioredoxin]-dithiol + NADP(+) = [thioredoxin]-disulfide + NADPH + H(+). The protein is Thioredoxin reductase (trxB) of Chlamydia trachomatis serovar D (strain ATCC VR-885 / DSM 19411 / UW-3/Cx).